The following is a 436-amino-acid chain: MSDSTWMSADPHLASSLSPSQDERMRSPQNLHSQEDDDSSSESGSGNGSSTLNPSTSSSTQGDPAFPEMNGNGAVAPMDFTTAAEDQPINLCDKLPPATALGTPSYPSDGCGADGLRSRVKYGVKTTPESPPYSSGSYDSIKTEVSGCPEDLTVGRAPTADDDDDDHDDHEDNDKMNDSEGMDPERLKAFNMFVRLFVDENLDRMVPISKQPKEKIQAIIESCSRQFPEFQERARKRIRTYHKSCRRMKKNGMEMTRPTPPHLTSAMAENILAAACESETRKAAKRMRLEIYQSSQDEPIALDKQHSRDSAAITHSTYSLPASSYSQDPVYANGGLNYSYRGYGALSSNLQPPASLQTGNHSNGPTDLSMKGGASTTSTTPTPTPSSTSTSRPVPTAQLSPTEISAVRQLIAGYRESAAFLLRSADELENLILQQN.

The disordered stretch occupies residues 1-184 (MSDSTWMSAD…KMNDSEGMDP (184 aa)). Positions 41 to 61 (SESGSGNGSSTLNPSTSSSTQ) are enriched in low complexity. Residue serine 130 is modified to Phosphoserine. Over residues 160–169 (ADDDDDDHDD) the composition is skewed to acidic residues. The span at 170-184 (HEDNDKMNDSEGMDP) shows a compositional bias: basic and acidic residues. Residue serine 295 is modified to Phosphoserine. Over residues 351 to 366 (QPPASLQTGNHSNGPT) the composition is skewed to polar residues. The disordered stretch occupies residues 351–400 (QPPASLQTGNHSNGPTDLSMKGGASTTSTTPTPTPSSTSTSRPVPTAQLS). Low complexity predominate over residues 375-396 (STTSTTPTPTPSSTSTSRPVPT).

In Pongo abelii (Sumatran orangutan), this protein is Nucleolar protein 4-like (NOL4L).